The following is a 269-amino-acid chain: Pertussis toxin subunit 1 homolog (269 aa).

Residues 1–34 form the signal peptide; that stretch reads MRCTRAIRQTARTGWLTWLAILAVTAPMTSPAWA.

The protein belongs to the bacterial exotoxin subunit A family.

This is Pertussis toxin subunit 1 homolog (ptxA) from Bordetella parapertussis (strain 12822 / ATCC BAA-587 / NCTC 13253).